The primary structure comprises 203 residues: Outer-membrane lipoprotein LolB (203 aa).

An N-terminal signal peptide occupies residues Met-1–Gly-16. Cys-17 carries the N-palmitoyl cysteine lipid modification. Residue Cys-17 is the site of S-diacylglycerol cysteine attachment.

Belongs to the LolB family. In terms of assembly, monomer.

The protein localises to the cell outer membrane. Its function is as follows. Plays a critical role in the incorporation of lipoproteins in the outer membrane after they are released by the LolA protein. This is Outer-membrane lipoprotein LolB from Psychromonas ingrahamii (strain DSM 17664 / CCUG 51855 / 37).